The primary structure comprises 305 residues: Probable 2-methylisocitrate lyase 1 (305 aa).

Substrate is bound at residue 52-54 (SGA). D91 and D93 together coordinate Mg(2+). Residues 128–129 (CG), R163, E193, 216–218 (NMT), R247, and R276 contribute to the substrate site.

The protein belongs to the isocitrate lyase/PEP mutase superfamily. Methylisocitrate lyase family. Homotetramer; dimer of dimers. Requires Mg(2+) as cofactor.

It catalyses the reaction (2S,3R)-3-hydroxybutane-1,2,3-tricarboxylate = pyruvate + succinate. Its function is as follows. Catalyzes the thermodynamically favored C-C bond cleavage of (2R,3S)-2-methylisocitrate to yield pyruvate and succinate via an alpha-carboxy-carbanion intermediate. This Corynebacterium glutamicum (strain ATCC 13032 / DSM 20300 / JCM 1318 / BCRC 11384 / CCUG 27702 / LMG 3730 / NBRC 12168 / NCIMB 10025 / NRRL B-2784 / 534) protein is Probable 2-methylisocitrate lyase 1.